The following is a 101-amino-acid chain: NADH-quinone oxidoreductase subunit K (101 aa).

Helical transmembrane passes span 4–24 (LPHY…GIFV), 30–50 (IVIL…LVAF), and 61–81 (IFAM…LAIL).

It belongs to the complex I subunit 4L family. As to quaternary structure, NDH-1 is composed of 14 different subunits. Subunits NuoA, H, J, K, L, M, N constitute the membrane sector of the complex.

The protein resides in the cell inner membrane. It catalyses the reaction a quinone + NADH + 5 H(+)(in) = a quinol + NAD(+) + 4 H(+)(out). Functionally, NDH-1 shuttles electrons from NADH, via FMN and iron-sulfur (Fe-S) centers, to quinones in the respiratory chain. The immediate electron acceptor for the enzyme in this species is believed to be ubiquinone. Couples the redox reaction to proton translocation (for every two electrons transferred, four hydrogen ions are translocated across the cytoplasmic membrane), and thus conserves the redox energy in a proton gradient. The protein is NADH-quinone oxidoreductase subunit K of Caulobacter vibrioides (strain ATCC 19089 / CIP 103742 / CB 15) (Caulobacter crescentus).